Here is a 433-residue protein sequence, read N- to C-terminus: Enolase (433 aa).

Residue Gln167 coordinates (2R)-2-phosphoglycerate. Glu209 acts as the Proton donor in catalysis. Asp246, Glu291, and Asp318 together coordinate Mg(2+). (2R)-2-phosphoglycerate-binding residues include Lys343, Arg372, Ser373, and Lys394. Catalysis depends on Lys343, which acts as the Proton acceptor.

Belongs to the enolase family. Component of the RNA degradosome, a multiprotein complex involved in RNA processing and mRNA degradation. Mg(2+) is required as a cofactor.

Its subcellular location is the cytoplasm. It localises to the secreted. It is found in the cell surface. The catalysed reaction is (2R)-2-phosphoglycerate = phosphoenolpyruvate + H2O. Its pathway is carbohydrate degradation; glycolysis; pyruvate from D-glyceraldehyde 3-phosphate: step 4/5. Catalyzes the reversible conversion of 2-phosphoglycerate (2-PG) into phosphoenolpyruvate (PEP). It is essential for the degradation of carbohydrates via glycolysis. The sequence is that of Enolase from Vibrio vulnificus (strain CMCP6).